A 347-amino-acid polypeptide reads, in one-letter code: D-fructose 1,6-bisphosphatase class 2/sedoheptulose 1,7-bisphosphatase (347 aa).

Mn(2+)-binding residues include Asp33, Glu57, Asp97, and Glu100. Substrate-binding positions include Glu100 to Thr102, Tyr131, Arg176 to Arg178, and Asp198 to Asp200. Glu225 is a Mn(2+) binding site.

Belongs to the FBPase class 2 family. In terms of assembly, homotetramer. The cofactor is Mn(2+).

It catalyses the reaction beta-D-fructose 1,6-bisphosphate + H2O = beta-D-fructose 6-phosphate + phosphate. The catalysed reaction is D-sedoheptulose 1,7-bisphosphate + H2O = D-sedoheptulose 7-phosphate + phosphate. It participates in carbohydrate biosynthesis; Calvin cycle. Its function is as follows. Catalyzes the hydrolysis of fructose 1,6-bisphosphate (Fru 1,6-P2) and sedoheptulose 1,7-bisphosphate (Sed 1,7-P2) to fructose 6-phosphate and sedoheptulose 7-phosphate, respectively. The protein is D-fructose 1,6-bisphosphatase class 2/sedoheptulose 1,7-bisphosphatase of Synechococcus sp. (strain JA-2-3B'a(2-13)) (Cyanobacteria bacterium Yellowstone B-Prime).